Here is a 62-residue protein sequence, read N- to C-terminus: Large ribosomal subunit protein eL24 (62 aa).

The Zn(2+) site is built by Cys-6, Cys-9, Cys-32, and Cys-36. A C4-type zinc finger spans residues 6–36 (CSFCEGKIEPGCGKKYVKKDGSVMQFCSSKC).

This sequence belongs to the eukaryotic ribosomal protein eL24 family. As to quaternary structure, part of the 50S ribosomal subunit. Forms a cluster with proteins L3 and L14. Zn(2+) serves as cofactor.

In terms of biological role, binds to the 23S rRNA. This is Large ribosomal subunit protein eL24 from Methanococcus vannielii (strain ATCC 35089 / DSM 1224 / JCM 13029 / OCM 148 / SB).